A 50-amino-acid chain; its full sequence is ATP synthase protein 8 (50 aa).

The helical transmembrane segment at I13 to L32 threads the bilayer.

It belongs to the ATPase protein 8 family. In terms of assembly, F-type ATPases have 2 components, CF(1) - the catalytic core - and CF(0) - the membrane proton channel.

The protein resides in the mitochondrion membrane. In terms of biological role, mitochondrial membrane ATP synthase (F(1)F(0) ATP synthase or Complex V) produces ATP from ADP in the presence of a proton gradient across the membrane which is generated by electron transport complexes of the respiratory chain. F-type ATPases consist of two structural domains, F(1) - containing the extramembraneous catalytic core and F(0) - containing the membrane proton channel, linked together by a central stalk and a peripheral stalk. During catalysis, ATP synthesis in the catalytic domain of F(1) is coupled via a rotary mechanism of the central stalk subunits to proton translocation. Part of the complex F(0) domain. Minor subunit located with subunit a in the membrane. The chain is ATP synthase protein 8 (ATP8) from Podospora anserina (strain S / ATCC MYA-4624 / DSM 980 / FGSC 10383) (Pleurage anserina).